The primary structure comprises 362 residues: Peptide chain release factor 1 (362 aa).

Position 237 is an N5-methylglutamine (Q237).

This sequence belongs to the prokaryotic/mitochondrial release factor family. In terms of processing, methylated by PrmC. Methylation increases the termination efficiency of RF1.

The protein localises to the cytoplasm. Its function is as follows. Peptide chain release factor 1 directs the termination of translation in response to the peptide chain termination codons UAG and UAA. In Vibrio parahaemolyticus serotype O3:K6 (strain RIMD 2210633), this protein is Peptide chain release factor 1.